The sequence spans 257 residues: uncharacterized protein (257 aa).

A signal peptide spans 1 to 22 (MGYLKRFALYISVMILIFAIAG). Cys23 carries N-palmitoyl cysteine lipidation. The S-diacylglycerol cysteine moiety is linked to residue Cys23.

Belongs to the staphylococcal tandem lipoprotein family.

The protein resides in the cell membrane. This is an uncharacterized protein from Staphylococcus aureus (strain USA300).